The following is a 284-amino-acid chain: Acetyl-coenzyme A carboxylase carboxyl transferase subunit beta (284 aa).

The CoA carboxyltransferase N-terminal domain maps to 31–284 (FWTYCKGCDS…LYQILAMHKK (254 aa)). Cys-35, Cys-38, Cys-54, and Cys-57 together coordinate Zn(2+). The segment at 35-57 (CKGCDSHVFRKDIEENSFVCPKC) adopts a C4-type zinc-finger fold.

It belongs to the AccD/PCCB family. As to quaternary structure, acetyl-CoA carboxylase is a heterohexamer composed of biotin carboxyl carrier protein (AccB), biotin carboxylase (AccC) and two subunits each of ACCase subunit alpha (AccA) and ACCase subunit beta (AccD). It depends on Zn(2+) as a cofactor.

It is found in the cytoplasm. It carries out the reaction N(6)-carboxybiotinyl-L-lysyl-[protein] + acetyl-CoA = N(6)-biotinyl-L-lysyl-[protein] + malonyl-CoA. The protein operates within lipid metabolism; malonyl-CoA biosynthesis; malonyl-CoA from acetyl-CoA: step 1/1. Functionally, component of the acetyl coenzyme A carboxylase (ACC) complex. Biotin carboxylase (BC) catalyzes the carboxylation of biotin on its carrier protein (BCCP) and then the CO(2) group is transferred by the transcarboxylase to acetyl-CoA to form malonyl-CoA. This is Acetyl-coenzyme A carboxylase carboxyl transferase subunit beta from Clostridioides difficile (strain 630) (Peptoclostridium difficile).